Consider the following 161-residue polypeptide: uncharacterized protein (161 aa).

This is an uncharacterized protein from Archaeoglobus fulgidus (strain ATCC 49558 / DSM 4304 / JCM 9628 / NBRC 100126 / VC-16).